The chain runs to 396 residues: 1-deoxy-D-xylulose 5-phosphate reductoisomerase (396 aa).

Residues T10, G11, S12, I13, G36, K37, N38, and N124 each contribute to the NADPH site. 1-deoxy-D-xylulose 5-phosphate is bound at residue K125. Residue E126 participates in NADPH binding. Residue D150 participates in Mn(2+) binding. 4 residues coordinate 1-deoxy-D-xylulose 5-phosphate: S151, E152, S186, and H209. E152 provides a ligand contact to Mn(2+). G215 serves as a coordination point for NADPH. The 1-deoxy-D-xylulose 5-phosphate site is built by S222, N227, K228, and E231. E231 provides a ligand contact to Mn(2+).

The protein belongs to the DXR family. Mg(2+) serves as cofactor. It depends on Mn(2+) as a cofactor.

The catalysed reaction is 2-C-methyl-D-erythritol 4-phosphate + NADP(+) = 1-deoxy-D-xylulose 5-phosphate + NADPH + H(+). It participates in isoprenoid biosynthesis; isopentenyl diphosphate biosynthesis via DXP pathway; isopentenyl diphosphate from 1-deoxy-D-xylulose 5-phosphate: step 1/6. Functionally, catalyzes the NADPH-dependent rearrangement and reduction of 1-deoxy-D-xylulose-5-phosphate (DXP) to 2-C-methyl-D-erythritol 4-phosphate (MEP). The polypeptide is 1-deoxy-D-xylulose 5-phosphate reductoisomerase (Actinobacillus pleuropneumoniae serotype 5b (strain L20)).